The following is a 344-amino-acid chain: DnaJ homolog subfamily C member 25 (344 aa).

A helical membrane pass occupies residues 5–25 (WVLLVALSVLFLSGRAGALTE). Residues 33 to 108 (VCYDVLGVSR…ETRKDYDYML (76 aa)) enclose the J domain. Helical transmembrane passes span 134–154 (IVILVSVCAVSIFQYYSWWSS) and 228–248 (ILLFQIILFPYYMFKYISWYV).

Belongs to the DNAJC25 family.

The protein localises to the membrane. This chain is DnaJ homolog subfamily C member 25 (dnajc25), found in Xenopus laevis (African clawed frog).